We begin with the raw amino-acid sequence, 305 residues long: UDP-3-O-acyl-N-acetylglucosamine deacetylase (305 aa).

The Zn(2+) site is built by His-79, His-238, and Asp-242. Residue His-265 is the Proton donor of the active site.

The protein belongs to the LpxC family. Zn(2+) serves as cofactor.

It carries out the reaction a UDP-3-O-[(3R)-3-hydroxyacyl]-N-acetyl-alpha-D-glucosamine + H2O = a UDP-3-O-[(3R)-3-hydroxyacyl]-alpha-D-glucosamine + acetate. The protein operates within glycolipid biosynthesis; lipid IV(A) biosynthesis; lipid IV(A) from (3R)-3-hydroxytetradecanoyl-[acyl-carrier-protein] and UDP-N-acetyl-alpha-D-glucosamine: step 2/6. Catalyzes the hydrolysis of UDP-3-O-myristoyl-N-acetylglucosamine to form UDP-3-O-myristoylglucosamine and acetate, the committed step in lipid A biosynthesis. The chain is UDP-3-O-acyl-N-acetylglucosamine deacetylase from Pasteurella multocida (strain Pm70).